The sequence spans 298 residues: Ethanolamine ammonia-lyase small subunit (298 aa).

Residues Val-210, Glu-231, and Cys-261 each coordinate adenosylcob(III)alamin.

Belongs to the EutC family. The basic unit is a heterodimer which dimerizes to form tetramers. The heterotetramers trimerize; 6 large subunits form a core ring with 6 small subunits projecting outwards. Requires adenosylcob(III)alamin as cofactor.

It is found in the bacterial microcompartment. The catalysed reaction is ethanolamine = acetaldehyde + NH4(+). The protein operates within amine and polyamine degradation; ethanolamine degradation. In terms of biological role, catalyzes the deamination of various vicinal amino-alcohols to oxo compounds. Allows this organism to utilize ethanolamine as the sole source of nitrogen and carbon in the presence of external vitamin B12. This Salmonella agona (strain SL483) protein is Ethanolamine ammonia-lyase small subunit.